The following is a 439-amino-acid chain: Na(+)/H(+) antiporter NhaA 1 (439 aa).

11 helical membrane passes run 14 to 34 (ITGG…ANLA), 60 to 80 (ISLH…FIGL), 98 to 118 (ALPL…YYFF), 127 to 147 (GWGI…AMVG), 156 to 176 (IFLS…IAIF), 179 to 199 (EQIF…LAVA), 213 to 233 (IGLI…TIAG), 303 to 323 (HPIS…GVIV), 335 to 355 (IVLG…FLFA), 375 to 395 (IIGT…ISDL), and 408 to 428 (VAVL…LISA).

Belongs to the NhaA Na(+)/H(+) (TC 2.A.33) antiporter family.

It is found in the cell inner membrane. The enzyme catalyses Na(+)(in) + 2 H(+)(out) = Na(+)(out) + 2 H(+)(in). Na(+)/H(+) antiporter that extrudes sodium in exchange for external protons. This is Na(+)/H(+) antiporter NhaA 1 from Psychromonas ingrahamii (strain DSM 17664 / CCUG 51855 / 37).